Consider the following 449-residue polypeptide: Zinc finger and BTB domain-containing protein 14 (449 aa).

A BTB domain is found at Cys-36–Lys-102. Lys-46 participates in a covalent cross-link: Glycyl lysine isopeptide (Lys-Gly) (interchain with G-Cter in SUMO2). The short motif at His-50–Lys-66 is the Nuclear localization signal element. Residues Ala-156–Thr-194 form a disordered region. Acidic residues predominate over residues Asp-157–Val-178. Glycyl lysine isopeptide (Lys-Gly) (interchain with G-Cter in SUMO2) cross-links involve residues Lys-203 and Lys-249. 5 C2H2-type zinc fingers span residues Ile-277 to Pro-304, Phe-305 to Pro-332, Tyr-333 to Pro-360, Phe-361 to Pro-388, and Phe-389 to Gln-417. Positions Lys-405 to Gln-417 are enriched in basic and acidic residues. The tract at residues Lys-405–Gln-424 is disordered.

This sequence belongs to the krueppel C2H2-type zinc-finger protein family. As to quaternary structure, interacts with ZBTB21. As to expression, ubiquitous.

It is found in the nucleus. Transcriptional activator of the dopamine transporter (DAT), binding it's promoter at the consensus sequence 5'-CCTGCACAGTTCACGGA-3'. Binds to 5'-d(GCC)(n)-3' trinucleotide repeats in promoter regions and acts as a repressor of the FMR1 gene. Transcriptional repressor of MYC and thymidine kinase promoters. The chain is Zinc finger and BTB domain-containing protein 14 (Zbtb14) from Mus musculus (Mouse).